We begin with the raw amino-acid sequence, 296 residues long: Pantothenate synthetase (296 aa).

30–37 (MGNLHEGH) contributes to the ATP binding site. His37 acts as the Proton donor in catalysis. Gln61 is a (R)-pantoate binding site. Gln61 provides a ligand contact to beta-alanine. An ATP-binding site is contributed by 149–152 (GEKD). Gln155 provides a ligand contact to (R)-pantoate. ATP contacts are provided by residues Val178 and 186-189 (MSSR).

It belongs to the pantothenate synthetase family. In terms of assembly, homodimer.

Its subcellular location is the cytoplasm. The catalysed reaction is (R)-pantoate + beta-alanine + ATP = (R)-pantothenate + AMP + diphosphate + H(+). It participates in cofactor biosynthesis; (R)-pantothenate biosynthesis; (R)-pantothenate from (R)-pantoate and beta-alanine: step 1/1. In terms of biological role, catalyzes the condensation of pantoate with beta-alanine in an ATP-dependent reaction via a pantoyl-adenylate intermediate. In Vibrio atlanticus (strain LGP32) (Vibrio splendidus (strain Mel32)), this protein is Pantothenate synthetase.